A 91-amino-acid chain; its full sequence is Non-specific lipid-transfer protein 1 (91 aa).

Cystine bridges form between Cys4–Cys51, Cys14–Cys28, Cys29–Cys74, and Cys49–Cys88.

This sequence belongs to the plant LTP family. In terms of tissue distribution, detected in seeds (at protein level).

Its function is as follows. Plant non-specific lipid-transfer proteins transfer phospholipids as well as galactolipids across membranes. May play a role in wax or cutin deposition in the cell walls of expanding epidermal cells and certain secretory tissues. This is Non-specific lipid-transfer protein 1 from Carum carvi (Caraway).